The primary structure comprises 491 residues: MHTKTLTELKAGLAAGDFSSRELTEHFLARIKQYDGELNSFVTVTEEQALAQADAADATLATNRASSSVSGLLTGLPIAHKDIFCTEGVRTSCGSKMLDNFIAPYTATVVEKMAAEGAVMLGKTNMDEFAMGSSNETSYYGPVKNPWDLERVPGGSSGGAAACLGARLAPAATGTDTGGSIRQPAALNNITGLKPTYGRVSRWGMIAFASSLDQAGPMAQSAEDCALMLQAMAGHDHRDSTSLNEKVGDYLGALKDDIRGLTIGIPEEFFPDTLDGAIADNSRDAIRELEKLGAKVVSVSLPSIKLSVPAYYVIAPAEASANLSRFDGVRFGHRCDDPQDLEDLYKRSRSEGFGDEVKRRILVGAYALSAGYYDAYYRRAQQVRSLIRDDFARAFEKVDVLMGPTAPETAFKLGAKKDDPVSMYMADVFTIGVNLAGLPALSMPTGFINGLPTGTQIIGNYFREGQILNVAHKYQQATDWHKQAPAFGGAQ.

Catalysis depends on charge relay system residues Lys81 and Ser156. The active-site Acyl-ester intermediate is the Ser180.

The protein belongs to the amidase family. GatA subfamily. As to quaternary structure, heterotrimer of A, B and C subunits.

The enzyme catalyses L-glutamyl-tRNA(Gln) + L-glutamine + ATP + H2O = L-glutaminyl-tRNA(Gln) + L-glutamate + ADP + phosphate + H(+). Functionally, allows the formation of correctly charged Gln-tRNA(Gln) through the transamidation of misacylated Glu-tRNA(Gln) in organisms which lack glutaminyl-tRNA synthetase. The reaction takes place in the presence of glutamine and ATP through an activated gamma-phospho-Glu-tRNA(Gln). This Alcanivorax borkumensis (strain ATCC 700651 / DSM 11573 / NCIMB 13689 / SK2) protein is Glutamyl-tRNA(Gln) amidotransferase subunit A.